Reading from the N-terminus, the 201-residue chain is Large ribosomal subunit protein uL4 (201 aa).

Residues 46-71 are disordered; sequence QKTRAEITGTGKKPWRQKGTGRARAG.

It belongs to the universal ribosomal protein uL4 family. Part of the 50S ribosomal subunit.

Functionally, one of the primary rRNA binding proteins, this protein initially binds near the 5'-end of the 23S rRNA. It is important during the early stages of 50S assembly. It makes multiple contacts with different domains of the 23S rRNA in the assembled 50S subunit and ribosome. In terms of biological role, forms part of the polypeptide exit tunnel. The protein is Large ribosomal subunit protein uL4 of Shewanella amazonensis (strain ATCC BAA-1098 / SB2B).